The following is a 205-amino-acid chain: Mitochondrial ATP-independent inner membrane protease subunit 2 (205 aa).

Active-site residues include glutamate 59 and arginine 104.

This sequence belongs to the peptidase S26 family. IMP1 subfamily. Heterodimer of 2 subunits, IMP1A/B and IMP12.

It localises to the mitochondrion inner membrane. Functionally, catalyzes the removal of transit peptides required for the targeting of proteins from the mitochondrial matrix, across the inner membrane, into the inter-membrane space. This is Mitochondrial ATP-independent inner membrane protease subunit 2 from Arabidopsis thaliana (Mouse-ear cress).